The sequence spans 173 residues: Ribosome maturation factor RimM (173 aa).

The PRC barrel domain occupies 97-171; that stretch reads EGEFFYHEII…QITIEPMEGL (75 aa).

The protein belongs to the RimM family. As to quaternary structure, binds ribosomal protein uS19.

Its subcellular location is the cytoplasm. In terms of biological role, an accessory protein needed during the final step in the assembly of 30S ribosomal subunit, possibly for assembly of the head region. Essential for efficient processing of 16S rRNA. May be needed both before and after RbfA during the maturation of 16S rRNA. It has affinity for free ribosomal 30S subunits but not for 70S ribosomes. This Halalkalibacterium halodurans (strain ATCC BAA-125 / DSM 18197 / FERM 7344 / JCM 9153 / C-125) (Bacillus halodurans) protein is Ribosome maturation factor RimM.